Consider the following 77-residue polypeptide: Envelope protein US9 homolog (77 aa).

The short motif at 12-13 (LL) is the Di-leucine internalization motif element.

This sequence belongs to the alphaherpesvirinae envelope protein US9 family.

The polypeptide is Envelope protein US9 homolog (Chlorocebus aethiops (Green monkey)).